The primary structure comprises 368 residues: Histidinol-phosphate aminotransferase 1 (368 aa).

Lys224 carries the N6-(pyridoxal phosphate)lysine modification.

This sequence belongs to the class-II pyridoxal-phosphate-dependent aminotransferase family. Histidinol-phosphate aminotransferase subfamily. Homodimer. Pyridoxal 5'-phosphate serves as cofactor.

The catalysed reaction is L-histidinol phosphate + 2-oxoglutarate = 3-(imidazol-4-yl)-2-oxopropyl phosphate + L-glutamate. Its pathway is amino-acid biosynthesis; L-histidine biosynthesis; L-histidine from 5-phospho-alpha-D-ribose 1-diphosphate: step 7/9. In Rhizobium meliloti (strain 1021) (Ensifer meliloti), this protein is Histidinol-phosphate aminotransferase 1 (hisC1).